The sequence spans 374 residues: Putative serine/threonine-protein kinase ZK507.3 (374 aa).

The region spanning 25 to 296 (WKVIVELGKG…CKLTLKEPLV (272 aa)) is the Protein kinase domain. ATP-binding positions include 31-39 (LGKGGYGTV) and K60. D158 functions as the Proton acceptor in the catalytic mechanism. The disordered stretch occupies residues 302–374 (NDNESGSTPT…KTRNKKPSRK (73 aa)). Over residues 306–324 (SGSTPTTSATACSPSSSTG) the composition is skewed to low complexity. Positions 334–343 (IASNIDQKSI) are enriched in polar residues. Basic residues predominate over residues 364–374 (TKTRNKKPSRK).

Belongs to the protein kinase superfamily. Ser/Thr protein kinase family.

The enzyme catalyses L-seryl-[protein] + ATP = O-phospho-L-seryl-[protein] + ADP + H(+). The catalysed reaction is L-threonyl-[protein] + ATP = O-phospho-L-threonyl-[protein] + ADP + H(+). The chain is Putative serine/threonine-protein kinase ZK507.3 from Caenorhabditis elegans.